We begin with the raw amino-acid sequence, 619 residues long: Translation initiation factor IF-2 (619 aa).

Residues 120-289 (PRPPIVTIMG…ILLLGEVEGY (170 aa)) enclose the tr-type G domain. Positions 129–136 (GHVDHGKT) are G1. Position 129–136 (129–136 (GHVDHGKT)) interacts with GTP. A G2 region spans residues 154–158 (GITQK). A G3 region spans residues 176–179 (DTPG). Residues 176–180 (DTPGH) and 230–233 (NKMD) contribute to the GTP site. The tract at residues 230–233 (NKMD) is G4. The segment at 266–268 (SAL) is G5.

Belongs to the TRAFAC class translation factor GTPase superfamily. Classic translation factor GTPase family. IF-2 subfamily.

It localises to the cytoplasm. Functionally, one of the essential components for the initiation of protein synthesis. Protects formylmethionyl-tRNA from spontaneous hydrolysis and promotes its binding to the 30S ribosomal subunits. Also involved in the hydrolysis of GTP during the formation of the 70S ribosomal complex. The sequence is that of Translation initiation factor IF-2 (infB) from Mycoplasma genitalium (strain ATCC 33530 / DSM 19775 / NCTC 10195 / G37) (Mycoplasmoides genitalium).